Consider the following 220-residue polypeptide: UPF0758 protein Asuc_0013 (220 aa).

Residues Glu98–Leu220 enclose the MPN domain. Zn(2+) contacts are provided by His169, His171, and Asp182. The JAMM motif motif lies at His169–Asp182.

Belongs to the UPF0758 family.

The protein is UPF0758 protein Asuc_0013 of Actinobacillus succinogenes (strain ATCC 55618 / DSM 22257 / CCUG 43843 / 130Z).